The chain runs to 183 residues: Glutathione-regulated potassium-efflux system ancillary protein KefG (183 aa).

This sequence belongs to the NAD(P)H dehydrogenase (quinone) family. KefG subfamily. Interacts with KefB.

Its subcellular location is the cell inner membrane. It carries out the reaction a quinone + NADH + H(+) = a quinol + NAD(+). It catalyses the reaction a quinone + NADPH + H(+) = a quinol + NADP(+). Functionally, regulatory subunit of a potassium efflux system that confers protection against electrophiles. Required for full activity of KefB. The polypeptide is Glutathione-regulated potassium-efflux system ancillary protein KefG (Salmonella gallinarum (strain 287/91 / NCTC 13346)).